The chain runs to 360 residues: Peptide chain release factor 1 (360 aa).

N5-methylglutamine is present on Gln-236.

It belongs to the prokaryotic/mitochondrial release factor family. Methylated by PrmC. Methylation increases the termination efficiency of RF1.

It localises to the cytoplasm. In terms of biological role, peptide chain release factor 1 directs the termination of translation in response to the peptide chain termination codons UAG and UAA. The sequence is that of Peptide chain release factor 1 from Limosilactobacillus reuteri subsp. reuteri (strain JCM 1112) (Lactobacillus reuteri).